A 419-amino-acid chain; its full sequence is L-rhamnose isomerase (419 aa).

Mn(2+) is bound by residues H262, D294, and D296.

Belongs to the rhamnose isomerase family. Homotetramer. Requires Mn(2+) as cofactor.

Its subcellular location is the cytoplasm. It carries out the reaction L-rhamnopyranose = L-rhamnulose. It functions in the pathway carbohydrate degradation; L-rhamnose degradation; glycerone phosphate from L-rhamnose: step 1/3. In terms of biological role, catalyzes the interconversion of L-rhamnose and L-rhamnulose. This is L-rhamnose isomerase from Escherichia coli O17:K52:H18 (strain UMN026 / ExPEC).